Reading from the N-terminus, the 533-residue chain is Inositol-3-phosphate synthase (533 aa).

Threonine 48 is modified (phosphothreonine). NAD(+)-binding residues include glycine 74, glycine 75, asparagine 76, asparagine 77, and aspartate 148. Serine 177 and serine 184 each carry phosphoserine. NAD(+) contacts are provided by serine 184, isoleucine 185, glutamine 195, aspartate 196, arginine 198, threonine 244, alanine 245, asparagine 246, threonine 247, glycine 295, serine 296, aspartate 320, leucine 321, serine 323, asparagine 354, asparagine 355, and aspartate 356. Residue serine 296 is modified to Phosphoserine. The residue at position 368 (serine 368) is a Phosphoserine. NAD(+) is bound at residue lysine 369. A Phosphoserine modification is found at serine 374. The NAD(+) site is built by glycine 409, aspartate 410, aspartate 438, and serine 439.

The protein belongs to the myo-inositol 1-phosphate synthase family. As to quaternary structure, homotetramer. Requires NAD(+) as cofactor. Post-translationally, phosphorylation at Ser-184 and Ser-374 is associated with a decrease in activity. Increasingly phosphorylated in presence of valproate.

Its subcellular location is the cytoplasm. The catalysed reaction is D-glucose 6-phosphate = 1D-myo-inositol 3-phosphate. It functions in the pathway polyol metabolism; myo-inositol biosynthesis; myo-inositol from D-glucose 6-phosphate: step 1/2. Competitively inhibited by myo-2-inosose 1-phosphate, which is also an intermediate in the catalytic reaction. Competitively inhibited by 2-deoxy-myo-inositol 1-phosphate (dMIP), 1-deoxy-1-(phosphonomethyl)-myo-2-inosose (DPMI), dihydroxyacetone phosphate (DHAP), 6-deoxy-D-glucose 6-(E)-vinylhomophosphonate, 6-deoxy-D-glucitol 6-(E)-vinylhomophosphonate, 2,6-dideoxy-D-glucose 6-(E)-vinylhomophosphonate and 2,6-dideoxy-D-glucitol 6-(E)-vinylhomophosphonate. Inhibited by 2-deoxyglucitol 6-phosphate (dgtolP). In terms of biological role, key enzyme in myo-inositol biosynthesis pathway that catalyzes the conversion of glucose 6-phosphate to 1-myo-inositol 1-phosphate in a NAD-dependent manner. Rate-limiting enzyme in the synthesis of all inositol-containing compounds. This Saccharomyces cerevisiae (strain ATCC 204508 / S288c) (Baker's yeast) protein is Inositol-3-phosphate synthase (INO1).